A 398-amino-acid chain; its full sequence is Ornithine aminotransferase (398 aa).

Lysine 255 is modified (N6-(pyridoxal phosphate)lysine).

This sequence belongs to the class-III pyridoxal-phosphate-dependent aminotransferase family. OAT subfamily. Pyridoxal 5'-phosphate is required as a cofactor.

It localises to the cytoplasm. It carries out the reaction a 2-oxocarboxylate + L-ornithine = L-glutamate 5-semialdehyde + an L-alpha-amino acid. The protein operates within amino-acid biosynthesis; L-proline biosynthesis; L-glutamate 5-semialdehyde from L-ornithine: step 1/1. Its function is as follows. Catalyzes the interconversion of ornithine to glutamate semialdehyde. The sequence is that of Ornithine aminotransferase from Geobacillus sp. (strain WCH70).